Here is a 266-residue protein sequence, read N- to C-terminus: Translation initiation factor 2 subunit alpha (266 aa).

An S1 motif domain is found at 12–83; that stretch reads GEILIATVKQ…RKGTVDVSLK (72 aa).

It belongs to the eIF-2-alpha family. In terms of assembly, heterotrimer composed of an alpha, a beta and a gamma chain.

Functionally, eIF-2 functions in the early steps of protein synthesis by forming a ternary complex with GTP and initiator tRNA. This chain is Translation initiation factor 2 subunit alpha, found in Saccharolobus solfataricus (strain ATCC 35092 / DSM 1617 / JCM 11322 / P2) (Sulfolobus solfataricus).